We begin with the raw amino-acid sequence, 353 residues long: Diacetylchitobiose uptake system permease protein NgcF (353 aa).

A disordered region spans residues 1-24 (MKDTIPTAETASRRPEPAARGGRP). 6 consecutive transmembrane segments (helical) span residues 36–56 (FFLA…LIPF), 100–120 (LLAA…AVAI), 141–161 (IISF…WAQM), 197–217 (VMFV…IAAI), 254–274 (AYIY…AMVP), and 303–323 (TAMG…VFLV). One can recognise an ABC transmembrane type-1 domain in the interval 95 to 320 (LRNVALLAAF…AVTLVFAALV (226 aa)). Residues 329-353 (GGEGESKRKAPGSRARRAAAKGGAR) form a disordered region. The segment covering 337–353 (KAPGSRARRAAAKGGAR) has biased composition (basic residues).

This sequence belongs to the binding-protein-dependent transport system permease family. As to quaternary structure, the complex is composed of two ATP-binding proteins (MsiK), two transmembrane proteins (NgcF and NgcG) and a solute-binding protein (NgcE).

The protein localises to the cell membrane. Its function is as follows. Part of the ABC transporter complex NgcEFG-MsiK involved in N,N'-diacetylchitobiose ((GlcNAc)2) uptake. Responsible for the translocation of the substrate across the membrane. This Streptomyces coelicolor (strain ATCC BAA-471 / A3(2) / M145) protein is Diacetylchitobiose uptake system permease protein NgcF.